Here is a 460-residue protein sequence, read N- to C-terminus: Cysteine--tRNA ligase (460 aa).

C28 contributes to the Zn(2+) binding site. A 'HIGH' region motif is present at residues 30–40 (MTVYDYCHLGH). Zn(2+) contacts are provided by C209, H234, and E238. A 'KMSKS' region motif is present at residues 266–270 (KMSKS). An ATP-binding site is contributed by K269.

Belongs to the class-I aminoacyl-tRNA synthetase family. Monomer. It depends on Zn(2+) as a cofactor.

The protein resides in the cytoplasm. It carries out the reaction tRNA(Cys) + L-cysteine + ATP = L-cysteinyl-tRNA(Cys) + AMP + diphosphate. This is Cysteine--tRNA ligase from Pseudomonas aeruginosa (strain UCBPP-PA14).